We begin with the raw amino-acid sequence, 98 residues long: Large ribosomal subunit protein uL23 (98 aa).

It belongs to the universal ribosomal protein uL23 family. As to quaternary structure, part of the 50S ribosomal subunit. Contacts protein L29, and trigger factor when it is bound to the ribosome.

In terms of biological role, one of the early assembly proteins it binds 23S rRNA. One of the proteins that surrounds the polypeptide exit tunnel on the outside of the ribosome. Forms the main docking site for trigger factor binding to the ribosome. The sequence is that of Large ribosomal subunit protein uL23 from Methylobacterium sp. (strain 4-46).